The sequence spans 108 residues: Ribonuclease P protein component 4 (108 aa).

Zn(2+) contacts are provided by cysteine 60, cysteine 63, cysteine 86, and cysteine 89.

The protein belongs to the eukaryotic/archaeal RNase P protein component 4 family. In terms of assembly, consists of a catalytic RNA component and at least 4-5 protein subunits. The cofactor is Zn(2+).

It localises to the cytoplasm. It catalyses the reaction Endonucleolytic cleavage of RNA, removing 5'-extranucleotides from tRNA precursor.. Functionally, part of ribonuclease P, a protein complex that generates mature tRNA molecules by cleaving their 5'-ends. The polypeptide is Ribonuclease P protein component 4 (Sulfurisphaera tokodaii (strain DSM 16993 / JCM 10545 / NBRC 100140 / 7) (Sulfolobus tokodaii)).